The chain runs to 304 residues: UDP-N-acetylenolpyruvoylglucosamine reductase (304 aa).

Residues 33-198 enclose the FAD-binding PCMH-type domain; sequence RVGGPADILV…IEATVELESG (166 aa). Arg177 is a catalytic residue. Ser227 serves as the catalytic Proton donor. Residue Glu297 is part of the active site.

This sequence belongs to the MurB family. FAD is required as a cofactor.

Its subcellular location is the cytoplasm. The catalysed reaction is UDP-N-acetyl-alpha-D-muramate + NADP(+) = UDP-N-acetyl-3-O-(1-carboxyvinyl)-alpha-D-glucosamine + NADPH + H(+). It functions in the pathway cell wall biogenesis; peptidoglycan biosynthesis. Functionally, cell wall formation. The polypeptide is UDP-N-acetylenolpyruvoylglucosamine reductase (Clostridium perfringens (strain ATCC 13124 / DSM 756 / JCM 1290 / NCIMB 6125 / NCTC 8237 / Type A)).